Here is a 131-residue protein sequence, read N- to C-terminus: ER membrane protein complex subunit 5 (131 aa).

Topologically, residues 1-3 (MAP) are cytoplasmic. Residues 4-22 (SLWKGLVGIGLFALAHAAL) traverse the membrane as a helical segment. Over 23-43 (SAAQHRSYMRLTEKEDESLPI) the chain is Lumenal. A helical membrane pass occupies residues 44–63 (DIVLQTLLAFAVTCYGIVHI). At 64 to 131 (AGEFKDMDAT…KLRKLESLRR (68 aa)) the chain is on the cytoplasmic side. Serine 120 carries the phosphoserine modification.

It belongs to the membrane magnesium transporter (TC 1.A.67) family. As to quaternary structure, component of the ER membrane protein complex (EMC).

The protein localises to the endoplasmic reticulum membrane. The protein resides in the golgi apparatus membrane. Its subcellular location is the early endosome membrane. In terms of biological role, part of the endoplasmic reticulum membrane protein complex (EMC) that enables the energy-independent insertion into endoplasmic reticulum membranes of newly synthesized membrane proteins. Preferentially accommodates proteins with transmembrane domains that are weakly hydrophobic or contain destabilizing features such as charged and aromatic residues. Involved in the cotranslational insertion of multi-pass membrane proteins in which stop-transfer membrane-anchor sequences become ER membrane spanning helices. It is also required for the post-translational insertion of tail-anchored/TA proteins in endoplasmic reticulum membranes. By mediating the proper cotranslational insertion of N-terminal transmembrane domains in an N-exo topology, with translocated N-terminus in the lumen of the ER, controls the topology of multi-pass membrane proteins like the G protein-coupled receptors. By regulating the insertion of various proteins in membranes, it is indirectly involved in many cellular processes. May be involved in Mg(2+) transport. In Pongo abelii (Sumatran orangutan), this protein is ER membrane protein complex subunit 5.